Reading from the N-terminus, the 93-residue chain is Large ribosomal subunit protein uL23cz/uL23cy (93 aa).

This sequence belongs to the universal ribosomal protein uL23 family. As to quaternary structure, part of the 50S ribosomal subunit.

It localises to the plastid. It is found in the chloroplast. Functionally, binds to 23S rRNA. This chain is Large ribosomal subunit protein uL23cz/uL23cy (rpl23-A), found in Oenothera elata subsp. hookeri (Hooker's evening primrose).